The sequence spans 179 residues: ATP synthase subunit delta, chloroplastic (179 aa).

The protein belongs to the ATPase delta chain family. F-type ATPases have 2 components, F(1) - the catalytic core - and F(0) - the membrane proton channel. F(1) has five subunits: alpha(3), beta(3), gamma(1), delta(1), epsilon(1). CF(0) has four main subunits: a(1), b(1), b'(1) and c(10-14). The alpha and beta chains form an alternating ring which encloses part of the gamma chain. F(1) is attached to F(0) by a central stalk formed by the gamma and epsilon chains, while a peripheral stalk is formed by the delta, b and b' chains.

It is found in the plastid. It localises to the chloroplast thylakoid membrane. Functionally, f(1)F(0) ATP synthase produces ATP from ADP in the presence of a proton or sodium gradient. F-type ATPases consist of two structural domains, F(1) containing the extramembraneous catalytic core and F(0) containing the membrane proton channel, linked together by a central stalk and a peripheral stalk. During catalysis, ATP synthesis in the catalytic domain of F(1) is coupled via a rotary mechanism of the central stalk subunits to proton translocation. This protein is part of the stalk that links CF(0) to CF(1). It either transmits conformational changes from CF(0) to CF(1) or is implicated in proton conduction. The sequence is that of ATP synthase subunit delta, chloroplastic from Ochrosphaera neapolitana.